The following is a 635-amino-acid chain: Transcription termination factor FttA (635 aa).

KHa stretches follow at residues 1–69 (MSAE…PSVL) and 4–69 (EDIL…PSVL). The tract at residues 70-137 (VEPDIAKDKI…WAPKPVRTPP (68 aa)) is KHb. Metallo-beta-lactamase N-terminus regions lie at residues 179-382 (WVRT…YGGY) and 179-383 (WVRT…GGYD). Beta-Casp stretches follow at residues 180-577 (VRTS…GFSG) and 383-576 (DDVL…EGFS). Positions 241, 243, 245, 246, 328, and 351 each coordinate Zn(2+). Metallo-beta-lactamase C-terminus regions lie at residues 577 to 635 (GHSD…IRLR) and 578 to 635 (HSDR…IRLR). Residue His602 coordinates Zn(2+).

Belongs to the metallo-beta-lactamase superfamily. RNA-metabolizing metallo-beta-lactamase-like family. FttA subfamily. As to quaternary structure, homodimer. Interacts with RNA polymerase (RNAP); interaction is not dependent on DNA or RNA. Interacts with the Spt4-Spt5 complex. It depends on Zn(2+) as a cofactor.

It localises to the chromosome. Functionally, terminates transcription on the whole genome. Termination is linked to FttA-mediated RNA cleavage and does not require NTP hydrolysis. Cleaves endonucleolytically at the RNA exit channel of RNA polymerase (RNAP); the 5'-3' exonuclease activity of this protein degrades the nascent RNA released from RNAP. Terminates transcription genome-wide. Transcription termination is most effective in vivo on RNAs with more than one U4-tract in their 3'-ends (including non-protein coding RNAs); U4-tracts are recognized by this protein. Also plays a role in termination of RNAs without U-tracts by an unknown mechanism. Has endonuclease activity after U-rich tracts in transcription termination sites. Binds RNA at U4-tracts found directly upstream of the experimentally determined transcription termination sites; binds preferentially to RNAs with more U4-tracts at their 3'-ends. This chain is Transcription termination factor FttA, found in Methanococcus maripaludis (strain DSM 14266 / JCM 13030 / NBRC 101832 / S2 / LL).